The primary structure comprises 500 residues: Probable malate:quinone oxidoreductase (500 aa).

This sequence belongs to the MQO family. It depends on FAD as a cofactor.

The enzyme catalyses (S)-malate + a quinone = a quinol + oxaloacetate. The protein operates within carbohydrate metabolism; tricarboxylic acid cycle; oxaloacetate from (S)-malate (quinone route): step 1/1. This chain is Probable malate:quinone oxidoreductase, found in Gluconobacter oxydans (strain 621H) (Gluconobacter suboxydans).